Reading from the N-terminus, the 547-residue chain is MAAKDVVFGDAARAKMVEGVNILANAVKVTLGPKGRNVVLERSFGGPTVTKDGVSVAKEIELKDKLQNMGAQMVKEVASKTSDNAGDGTTTATVLAQSIVREGMKYVAAGMNPMDLKRGIDKAVAAAVEELKKISKPTTTSKEIAQVGAISANSDESIGARIAEAMDKVGKEGVITVEDGKSLEDELDVVEGMQFDRGYLSPYFINNPEKQVVQLDNPFVLLFDKKISNIRDLLPVLEQVAKAGRPLLIVAEDVEGEALATLVVNNIRGILKTAAVKAPGFGDRRKAMLEDIAILTGGQVIAEEVGLTLEKATLNDLGQAKRVEIGKENTTIIDGAGDARNIEARVKQVRAQIEEATSDYDREKLQERVAKLAGGVAVIKVGAATEVEMKEKKARVEDALHATRAAVEEGIVAGGGVALLRARALISGLKGANADQDAGIKIVLRAMEEPLRQIVTNAGDEASVVVANVIAGKGNYGYNASTGEYGDLVEMGVLDPTKVTRTALQNAASVASLMLTTDCAVAELPKDDAAPAMPGGMGGMGGMDGMM.

ATP-binding positions include 30–33 (TLGP), lysine 51, 87–91 (DGTTT), glycine 415, and aspartate 495.

This sequence belongs to the chaperonin (HSP60) family. In terms of assembly, forms a cylinder of 14 subunits composed of two heptameric rings stacked back-to-back. Interacts with the co-chaperonin GroES.

Its subcellular location is the cytoplasm. It catalyses the reaction ATP + H2O + a folded polypeptide = ADP + phosphate + an unfolded polypeptide.. Its function is as follows. Together with its co-chaperonin GroES, plays an essential role in assisting protein folding. The GroEL-GroES system forms a nano-cage that allows encapsulation of the non-native substrate proteins and provides a physical environment optimized to promote and accelerate protein folding. This chain is Chaperonin GroEL, found in Ralstonia nicotianae (strain ATCC BAA-1114 / GMI1000) (Ralstonia solanacearum).